A 421-amino-acid chain; its full sequence is UDP-N-acetylglucosamine 1-carboxyvinyltransferase (421 aa).

Position 22 to 23 (22 to 23 (KN)) interacts with phosphoenolpyruvate. A UDP-N-acetyl-alpha-D-glucosamine-binding site is contributed by R92. The active-site Proton donor is C116. Position 116 is a 2-(S-cysteinyl)pyruvic acid O-phosphothioketal (C116). D306 and V328 together coordinate UDP-N-acetyl-alpha-D-glucosamine.

This sequence belongs to the EPSP synthase family. MurA subfamily.

The protein localises to the cytoplasm. It carries out the reaction phosphoenolpyruvate + UDP-N-acetyl-alpha-D-glucosamine = UDP-N-acetyl-3-O-(1-carboxyvinyl)-alpha-D-glucosamine + phosphate. It functions in the pathway cell wall biogenesis; peptidoglycan biosynthesis. In terms of biological role, cell wall formation. Adds enolpyruvyl to UDP-N-acetylglucosamine. The polypeptide is UDP-N-acetylglucosamine 1-carboxyvinyltransferase (Thermotoga petrophila (strain ATCC BAA-488 / DSM 13995 / JCM 10881 / RKU-1)).